We begin with the raw amino-acid sequence, 518 residues long: Protein FAM98A (518 aa).

Disordered stretches follow at residues 297 to 415 (VLMG…GHSS) and 434 to 518 (GSGY…HYTS). Residues 302–311 (VPDRGGRPNE) show a composition bias toward basic and acidic residues. Composition is skewed to gly residues over residues 349–364 (GGRGGHEQGGGRGGRG), 383–396 (WTDGGSGGGGGYQD), and 405–415 (QPGGYHGGHSS). Residues 447-459 (RYQDGGHHGDRGG) show a composition bias toward basic and acidic residues. Over residues 460–484 (GRGGRGGRGGRGGRAGQGGGWGGRG) the composition is skewed to gly residues. Over residues 488–504 (YHQGGQFEQHFQHGGYQ) the composition is skewed to low complexity. Residues 505 to 518 (YNHSGFGQGRHYTS) are compositionally biased toward polar residues.

Belongs to the FAM98 family. In terms of assembly, interacts (via N- and C-terminus) with DDX1. Interacts (via N- and C-terminus) with C14orf166. Interacts with FAM98B. Interacts with PLEKHM1 (via N- and C-terminus). In terms of tissue distribution, expressed strongly in colorectal cancer cells. Expressed strongly in colorectal cancer tissues compared to wild-type colon samples (at protein level). Expressed strongly in colorectal cancer tissues compared to wild-type colon samples.

Its function is as follows. Positively stimulates PRMT1-induced protein arginine methylation. Involved in skeletal homeostasis. Positively regulates lysosome peripheral distribution and ruffled border formation in osteoclasts. This is Protein FAM98A from Homo sapiens (Human).